The chain runs to 383 residues: Thioredoxin reductase 2 (383 aa).

FAD contacts are provided by residues 66–69 (SGPA), 87–88 (FE), 95–100 (IAPGGQ), Asn-109, Val-142, Cys-200, Asp-345, and 352–354 (RQA). Cysteines 197 and 200 form a disulfide.

It belongs to the class-II pyridine nucleotide-disulfide oxidoreductase family. Homodimer. The cofactor is FAD.

It localises to the cytoplasm. The protein resides in the mitochondrion matrix. The catalysed reaction is [thioredoxin]-dithiol + NADP(+) = [thioredoxin]-disulfide + NADPH + H(+). Its function is as follows. Possesses thioredoxin-disulfide reductase activity towards thioredoxins O1, O2 and F3. This Arabidopsis thaliana (Mouse-ear cress) protein is Thioredoxin reductase 2 (NTR2).